We begin with the raw amino-acid sequence, 331 residues long: Fructose-1,6-bisphosphatase class 1 2 (331 aa).

Glu-80, Asp-98, Leu-100, and Asp-101 together coordinate Mg(2+). Residues 101 to 104 (DGSS) and Asn-189 contribute to the substrate site. Glu-261 provides a ligand contact to Mg(2+).

Belongs to the FBPase class 1 family. As to quaternary structure, homotetramer. Requires Mg(2+) as cofactor.

The protein resides in the cytoplasm. The catalysed reaction is beta-D-fructose 1,6-bisphosphate + H2O = beta-D-fructose 6-phosphate + phosphate. The protein operates within carbohydrate biosynthesis; Calvin cycle. The chain is Fructose-1,6-bisphosphatase class 1 2 from Cereibacter sphaeroides (strain ATCC 17029 / ATH 2.4.9) (Rhodobacter sphaeroides).